The chain runs to 124 residues: Glycine cleavage system H protein (124 aa).

The 83-residue stretch at 19–101 (VATVGITNHA…EGEGWLFKME (83 aa)) folds into the Lipoyl-binding domain. Position 60 is an N6-lipoyllysine (Lys60).

It belongs to the GcvH family. As to quaternary structure, the glycine cleavage system is composed of four proteins: P, T, L and H. The cofactor is (R)-lipoate.

Its function is as follows. The glycine cleavage system catalyzes the degradation of glycine. The H protein shuttles the methylamine group of glycine from the P protein to the T protein. The chain is Glycine cleavage system H protein from Thermotoga maritima (strain ATCC 43589 / DSM 3109 / JCM 10099 / NBRC 100826 / MSB8).